Reading from the N-terminus, the 565-residue chain is Thiol:disulfide interchange protein DsbD (565 aa).

Positions 1-19 are cleaved as a signal peptide; the sequence is MAQRIFTLILLLCSTSVFA. Disulfide bonds link C122–C128 and C182–C304. The next 7 helical transmembrane spans lie at 163 to 183, 208 to 228, 243 to 263, 289 to 309, 323 to 343, 357 to 377, and 384 to 404; these read LPFS…TPCV, LLTF…GLVV, YVLI…FGLF, GVFI…TAPL, WLGG…LMLI, WMEQ…VFLL, and IWGL…AFIT. Residues 434 to 565 form the Thioredoxin domain; it reads WAFGETHTAQ…FSAHLRDRQP (132 aa). Residues C480 and C483 are joined by a disulfide bond.

It belongs to the thioredoxin family. DsbD subfamily.

Its subcellular location is the cell inner membrane. The catalysed reaction is [protein]-dithiol + NAD(+) = [protein]-disulfide + NADH + H(+). The enzyme catalyses [protein]-dithiol + NADP(+) = [protein]-disulfide + NADPH + H(+). Required to facilitate the formation of correct disulfide bonds in some periplasmic proteins and for the assembly of the periplasmic c-type cytochromes. Acts by transferring electrons from cytoplasmic thioredoxin to the periplasm. This transfer involves a cascade of disulfide bond formation and reduction steps. This is Thiol:disulfide interchange protein DsbD from Escherichia coli O6:K15:H31 (strain 536 / UPEC).